The sequence spans 320 residues: Serpentine receptor class gamma-17 (320 aa).

The next 6 helical transmembrane spans lie at 25-45 (AIYF…ISLL), 80-100 (IFFG…STFF), 155-175 (FIML…QVIA), 192-212 (WASL…FTIV), 237-257 (FTSI…LTFA), and 268-288 (YILQ…IMFL).

Belongs to the nematode receptor-like protein srg family.

It is found in the membrane. This is Serpentine receptor class gamma-17 (srg-17) from Caenorhabditis elegans.